The following is a 156-amino-acid chain: Small ribosomal subunit protein uS7 (156 aa).

The protein belongs to the universal ribosomal protein uS7 family. In terms of assembly, part of the 30S ribosomal subunit. Contacts proteins S9 and S11.

Functionally, one of the primary rRNA binding proteins, it binds directly to 16S rRNA where it nucleates assembly of the head domain of the 30S subunit. Is located at the subunit interface close to the decoding center, probably blocks exit of the E-site tRNA. The protein is Small ribosomal subunit protein uS7 of Gloeobacter violaceus (strain ATCC 29082 / PCC 7421).